The sequence spans 210 residues: Probable septum site-determining protein MinC (210 aa).

It belongs to the MinC family. In terms of assembly, interacts with MinD and FtsZ.

Its function is as follows. Cell division inhibitor that blocks the formation of polar Z ring septums. Rapidly oscillates between the poles of the cell to destabilize FtsZ filaments that have formed before they mature into polar Z rings. Prevents FtsZ polymerization. In Thermotoga neapolitana (strain ATCC 49049 / DSM 4359 / NBRC 107923 / NS-E), this protein is Probable septum site-determining protein MinC.